We begin with the raw amino-acid sequence, 187 residues long: UPF0302 protein SERP1032 (187 aa).

This sequence belongs to the UPF0302 family.

The chain is UPF0302 protein SERP1032 from Staphylococcus epidermidis (strain ATCC 35984 / DSM 28319 / BCRC 17069 / CCUG 31568 / BM 3577 / RP62A).